The primary structure comprises 222 residues: N-(5'-phosphoribosyl)anthranilate isomerase (222 aa).

This sequence belongs to the TrpF family.

The enzyme catalyses N-(5-phospho-beta-D-ribosyl)anthranilate = 1-(2-carboxyphenylamino)-1-deoxy-D-ribulose 5-phosphate. It participates in amino-acid biosynthesis; L-tryptophan biosynthesis; L-tryptophan from chorismate: step 3/5. The protein is N-(5'-phosphoribosyl)anthranilate isomerase of Rhizobium etli (strain ATCC 51251 / DSM 11541 / JCM 21823 / NBRC 15573 / CFN 42).